A 302-amino-acid chain; its full sequence is Sulfate adenylyltransferase subunit 2 (302 aa).

The protein belongs to the PAPS reductase family. CysD subfamily. In terms of assembly, heterodimer composed of CysD, the smaller subunit, and CysN.

It carries out the reaction sulfate + ATP + H(+) = adenosine 5'-phosphosulfate + diphosphate. Its pathway is sulfur metabolism; hydrogen sulfide biosynthesis; sulfite from sulfate: step 1/3. With CysN forms the ATP sulfurylase (ATPS) that catalyzes the adenylation of sulfate producing adenosine 5'-phosphosulfate (APS) and diphosphate, the first enzymatic step in sulfur assimilation pathway. APS synthesis involves the formation of a high-energy phosphoric-sulfuric acid anhydride bond driven by GTP hydrolysis by CysN coupled to ATP hydrolysis by CysD. The sequence is that of Sulfate adenylyltransferase subunit 2 from Escherichia coli O6:K15:H31 (strain 536 / UPEC).